Consider the following 182-residue polypeptide: CASP-like protein 2B1 (182 aa).

Over 1–12 (MKLIDRRMRLTE) the chain is Cytoplasmic. Residues 13–31 (LLLRCSISVFALLALILVV) traverse the membrane as a helical segment. Over 32–52 (TDTEVKLIFTIKKTAKYTDMK) the chain is Extracellular. Residues 53-73 (AVVFLVVANGIAAVYSLLQSV) form a helical membrane-spanning segment. Residues 74-89 (RCVVGTMKGKVLFSKP) lie on the Cytoplasmic side of the membrane. The helical transmembrane segment at 90 to 110 (LAWAFFSGDQAMAYLNVAAIA) threads the bilayer. The Extracellular segment spans residues 111–141 (ATAESGVIAREGEEDLQWMRVCTMYGKFCNQ). Residues 142–162 (MAIGVSSALLASIAMVFVSCI) form a helical membrane-spanning segment. At 163–182 (SAFSLFRLYGATKDRRTTPW) the chain is on the cytoplasmic side.

It belongs to the Casparian strip membrane proteins (CASP) family. In terms of assembly, homodimer and heterodimers.

It is found in the cell membrane. The protein is CASP-like protein 2B1 of Arabidopsis thaliana (Mouse-ear cress).